A 116-amino-acid chain; its full sequence is Endocuticle structural glycoprotein ABD-4 (116 aa).

Gln1 carries the post-translational modification Pyrrolidone carboxylic acid. One can recognise a Chitin-binding type R&amp;R domain in the interval 20–92; it reads DGSYQWNYET…PQGAHFPTPP (73 aa). The interval 78–97 is disordered; sequence ENGFVPQGAHFPTPPPIPPA. Residue Thr90 is glycosylated (O-linked (GalNAc) threonine; in ADB-4A, ABD-4B and ABD-4C). An O-linked (GalNAc) threonine; in ADB-4A and ABD-4B glycan is attached at Thr107. O-linked (GalNAc) threonine; in ADB-4A glycosylation is present at Thr111. Pro116 carries the post-translational modification Proline amide.

In terms of processing, 3 variants exists that arise from a sequential glycosylation with N-acetylgalactosamine at three (ABD-4A), two (ABD-4B) or one (ABD-4C) threonine residues.

Functionally, component of the soft endocuticle of migratory locust. This chain is Endocuticle structural glycoprotein ABD-4, found in Locusta migratoria (Migratory locust).